The following is a 393-amino-acid chain: uncharacterized protein (393 aa).

An ATP-binding site is contributed by 67–74; that stretch reads GPDGMGKS.

This is an uncharacterized protein from Mycobacterium tuberculosis (strain CDC 1551 / Oshkosh).